A 1027-amino-acid polypeptide reads, in one-letter code: Translation initiation factor IF-2 (1027 aa).

A disordered region spans residues 31 to 433 (YVKSASSTVE…GGVRLPRGNG (403 aa)). Over residues 57-68 (KKGGGDSNGRAG) the composition is skewed to gly residues. The segment covering 110 to 122 (GPKPGPKPGPKAP) has biased composition (pro residues). Over residues 123-145 (APETKPFEEAPAPAAKADAPAQP) the composition is skewed to low complexity. Residues 148–171 (EQPRSEQPRSEQPRSEQPRSERSG) are compositionally biased toward basic and acidic residues. Pro residues-rich tracts occupy residues 174–188 (PGGP…PKPG) and 201–212 (PPKPQSPKPGPR). Positions 237–268 (PGGGQRQGGQGPGRGGPQGGRPDRQGGGGQGA) are enriched in gly residues. The segment covering 293 to 302 (GMMPPRPNPG) has biased composition (pro residues). A compositionally biased stretch (gly residues) spans 311–397 (SGGGPGGGRG…GAAGAFGRPG (87 aa)). Residues 401 to 410 (RRGRKSKRQK) are compositionally biased toward basic residues. Residues 523-695 (SRPPVVTVMG…ILLTADATLD (173 aa)) form the tr-type G domain. Residues 532-539 (GHVDHGKT) are G1. 532–539 (GHVDHGKT) lines the GTP pocket. Residues 557–561 (GITQH) are G2. Residues 582–585 (DTPG) are G3. GTP-binding positions include 582–586 (DTPGH) and 636–639 (NKID). Residues 636-639 (NKID) are G4. Residues 672-674 (SAR) form a G5 region.

Belongs to the TRAFAC class translation factor GTPase superfamily. Classic translation factor GTPase family. IF-2 subfamily.

It localises to the cytoplasm. One of the essential components for the initiation of protein synthesis. Protects formylmethionyl-tRNA from spontaneous hydrolysis and promotes its binding to the 30S ribosomal subunits. Also involved in the hydrolysis of GTP during the formation of the 70S ribosomal complex. The sequence is that of Translation initiation factor IF-2 from Saccharopolyspora erythraea (strain ATCC 11635 / DSM 40517 / JCM 4748 / NBRC 13426 / NCIMB 8594 / NRRL 2338).